The sequence spans 71 residues: Sec-independent protein translocase protein TatA (71 aa).

A helical transmembrane segment spans residues 1–21; it reads MGSFSLLHWLVVLVIVLLVFG. Residues 43-71 are disordered; sequence LHEDDKPTDQLGSTSQSTASGPQQDHGKH. Over residues 52 to 65 the composition is skewed to polar residues; that stretch reads QLGSTSQSTASGPQ.

Belongs to the TatA/E family. In terms of assembly, the Tat system comprises two distinct complexes: a TatABC complex, containing multiple copies of TatA, TatB and TatC subunits, and a separate TatA complex, containing only TatA subunits. Substrates initially bind to the TatABC complex, which probably triggers association of the separate TatA complex to form the active translocon.

Its subcellular location is the cell inner membrane. Its function is as follows. Part of the twin-arginine translocation (Tat) system that transports large folded proteins containing a characteristic twin-arginine motif in their signal peptide across membranes. TatA could form the protein-conducting channel of the Tat system. This Xylella fastidiosa (strain M12) protein is Sec-independent protein translocase protein TatA.